The chain runs to 138 residues: Basic phospholipase A2 homolog promutoxin (138 aa).

Positions 1–16 (MRTLWIMAVLLLGVEG) are cleaved as a signal peptide. Disulfide bonds link Cys42–Cys132, Cys44–Cys60, Cys59–Cys112, Cys65–Cys138, Cys66–Cys105, Cys73–Cys98, and Cys91–Cys103. Residues 122–133 (KKHRVTMKFLCK) form an important for membrane-damaging activities in eukaryotes and bacteria; heparin-binding region.

The protein belongs to the phospholipase A2 family. Group II subfamily. R49 sub-subfamily. In terms of assembly, homodimer; non-covalently linked. As to expression, expressed by the venom gland.

It localises to the secreted. Functionally, snake venom phospholipase A2 homolog that lacks enzymatic activity. Exhibits potent myotoxicity causing myonecrosis and edema in the gastrocnemius muscle of mice. Is also able to stimulate the release of IL12 (IL12A-IL12B), TNF-alpha (TNF), IL6 and IL1-beta (IL1B) from human monocytes, and induce IL2, TNFalpha and IL6 release from T-cells. A model of myotoxic mechanism has been proposed: an apo Lys49-PLA2 is activated by the entrance of a hydrophobic molecule (e.g. fatty acid) at the hydrophobic channel of the protein leading to a reorientation of a monomer. This reorientation causes a transition between 'inactive' to 'active' states, causing alignment of C-terminal and membrane-docking sites (MDoS) side-by-side and putting the membrane-disruption sites (MDiS) in the same plane, exposed to solvent and in a symmetric position for both monomers. The MDoS region stabilizes the toxin on membrane by the interaction of charged residues with phospholipid head groups. Subsequently, the MDiS region destabilizes the membrane with penetration of hydrophobic residues. This insertion causes a disorganization of the membrane, allowing an uncontrolled influx of ions (i.e. calcium and sodium), and eventually triggering irreversible intracellular alterations and cell death. The protein is Basic phospholipase A2 homolog promutoxin of Protobothrops mucrosquamatus (Taiwan habu).